Consider the following 317-residue polypeptide: Melanocyte-stimulating hormone receptor (317 aa).

The Extracellular portion of the chain corresponds to 1 to 37; the sequence is MPMQGAQRRLLGSLNSTPTATPNLGLAANHTGAPCLE. Asn-29 carries N-linked (GlcNAc...) asparagine glycosylation. Residues 38–63 form a helical membrane-spanning segment; it reads VSIPDGLFLSLGLVSLVENVLVVAAI. The Cytoplasmic portion of the chain corresponds to 64–72; sequence AKNRNLHSP. A helical membrane pass occupies residues 73 to 93; sequence MYCFICCLALSDLLVSGSNML. The Extracellular segment spans residues 94 to 118; sequence ETAVILLLEAGALATRASVVQQLQN. Residues 119 to 140 form a helical membrane-spanning segment; that stretch reads TIDVLTCSSMLCSLCFLGAIAV. Over 141–163 the chain is Cytoplasmic; that stretch reads DRYVSIFYALRYHSIVTLPRARR. Residues 164 to 183 traverse the membrane as a helical segment; it reads AIAAIWVASVLSSTLFIAYC. The Extracellular portion of the chain corresponds to 184-191; sequence DHAAVLLC. A helical membrane pass occupies residues 192–211; that stretch reads LVVFFLAMLVLMAVLYVHML. Residues 212 to 240 are Cytoplasmic-facing; that stretch reads ARACQHAQGITRLHKRQLPAHQGFGLRGA. The chain crosses the membrane as a helical span at residues 241-266; it reads ATLTILLGIFFLCWGPFFLHLMLVVL. The Extracellular segment spans residues 267–279; the sequence is CPQHLTCSCIFKN. The helical transmembrane segment at 280–300 threads the bilayer; the sequence is FKVFLTLIICNTIIDPLIYAF. Residues 301 to 317 are Cytoplasmic-facing; it reads RSQELCRTLKEVLLCSW. The S-palmitoyl cysteine moiety is linked to residue Cys-315.

This sequence belongs to the G-protein coupled receptor 1 family. Interacts with MGRN1, but does not undergo MGRN1-mediated ubiquitination; this interaction competes with GNAS-binding and thus inhibits agonist-induced cAMP production. Interacts with OPN3; the interaction results in a decrease in MC1R-mediated cAMP signaling and ultimately a decrease in melanin production in melanocytes.

The protein resides in the cell membrane. Receptor for MSH (alpha, beta and gamma) and ACTH. The activity of this receptor is mediated by G proteins which activate adenylate cyclase. Mediates melanogenesis, the production of eumelanin (black/brown) and phaeomelanin (red/yellow), via regulation of cAMP signaling in melanocytes. The polypeptide is Melanocyte-stimulating hormone receptor (MC1R) (Alouatta palliata (Mantled howler monkey)).